The following is a 513-amino-acid chain: ATP synthase subunit alpha 1 (513 aa).

169–176 (GDRQTGKT) provides a ligand contact to ATP.

Belongs to the ATPase alpha/beta chains family. As to quaternary structure, F-type ATPases have 2 components, CF(1) - the catalytic core - and CF(0) - the membrane proton channel. CF(1) has five subunits: alpha(3), beta(3), gamma(1), delta(1), epsilon(1). CF(0) has three main subunits: a(1), b(2) and c(9-12). The alpha and beta chains form an alternating ring which encloses part of the gamma chain. CF(1) is attached to CF(0) by a central stalk formed by the gamma and epsilon chains, while a peripheral stalk is formed by the delta and b chains.

The protein resides in the cell inner membrane. It catalyses the reaction ATP + H2O + 4 H(+)(in) = ADP + phosphate + 5 H(+)(out). In terms of biological role, produces ATP from ADP in the presence of a proton gradient across the membrane. The alpha chain is a regulatory subunit. This is ATP synthase subunit alpha 1 from Vibrio campbellii (strain ATCC BAA-1116).